The primary structure comprises 258 residues: Tryptophan synthase alpha chain (258 aa).

Catalysis depends on proton acceptor residues E46 and D57.

The protein belongs to the TrpA family. As to quaternary structure, tetramer of two alpha and two beta chains.

It carries out the reaction (1S,2R)-1-C-(indol-3-yl)glycerol 3-phosphate + L-serine = D-glyceraldehyde 3-phosphate + L-tryptophan + H2O. The protein operates within amino-acid biosynthesis; L-tryptophan biosynthesis; L-tryptophan from chorismate: step 5/5. Functionally, the alpha subunit is responsible for the aldol cleavage of indoleglycerol phosphate to indole and glyceraldehyde 3-phosphate. In Phocaeicola vulgatus (strain ATCC 8482 / DSM 1447 / JCM 5826 / CCUG 4940 / NBRC 14291 / NCTC 11154) (Bacteroides vulgatus), this protein is Tryptophan synthase alpha chain.